Consider the following 824-residue polypeptide: Kinesin-like protein KIFC3 (824 aa).

The segment at 27–79 (EPKPGMARPAPASPAARPFPHTGQGRLRTGRGKDILPSGEEDSTSRTAARPSL) is disordered. A compositionally biased stretch (low complexity) spans 33 to 46 (ARPAPASPAARPFP). Coiled-coil stretches lie at residues 100-360 (LTVQ…ENLA) and 393-430 (LLQE…LQLR). The 324-residue stretch at 443 to 766 (NIRVIARVRP…LRFAERVRSV (324 aa)) folds into the Kinesin motor domain. 526–533 (GQTGAGKT) contributes to the ATP binding site. A disordered region spans residues 771–824 (GSRRTELGSWSSQEHLEWEPACQTPQPTARAHSAPGSGTSSRPGSIRRKLQPSA). Residues Ser-811 and Ser-815 each carry the phosphoserine modification. Residues 815-824 (SIRRKLQPSA) are compositionally biased toward basic residues.

Belongs to the TRAFAC class myosin-kinesin ATPase superfamily. Kinesin family. Interacts with annexin XIIIB. In terms of tissue distribution, predominant expression in the kidney, testis and ovary. Also expressed in brain, heart, liver, lung and uterus.

It is found in the cytoplasm. The protein resides in the cytoskeleton. The protein localises to the cytoplasmic vesicle membrane. Its subcellular location is the cell junction. It localises to the adherens junction. It is found in the microtubule organizing center. The protein resides in the centrosome. In terms of biological role, minus-end microtubule-dependent motor protein. Involved in apically targeted transport. Required for zonula adherens maintenance. The sequence is that of Kinesin-like protein KIFC3 (Kifc3) from Mus musculus (Mouse).